The following is a 132-amino-acid chain: Small ribosomal subunit protein uS8 (132 aa).

This sequence belongs to the universal ribosomal protein uS8 family. In terms of assembly, part of the 30S ribosomal subunit. Contacts proteins S5 and S12.

Functionally, one of the primary rRNA binding proteins, it binds directly to 16S rRNA central domain where it helps coordinate assembly of the platform of the 30S subunit. This Xanthobacter autotrophicus (strain ATCC BAA-1158 / Py2) protein is Small ribosomal subunit protein uS8.